The primary structure comprises 331 residues: Putative T-box protein 36 (331 aa).

The T-box DNA-binding region spans 29-210; it reads EITKKQWNQL…MNRFSRKRKY (182 aa).

It localises to the nucleus. This chain is Putative T-box protein 36 (tbx-36), found in Caenorhabditis elegans.